A 598-amino-acid chain; its full sequence is IQ calmodulin-binding motif-containing protein 1 (598 aa).

Residues 1–157 form an interaction with BBS1, BBS8 and BBS9 region; sequence MKPAGTDPRI…SLFWLLGGHV (157 aa). The interaction with CEP290, BBS1, BBS2, BBS4, BBS5, BBS7, BBS8 and BBS9 stretch occupies residues 287–598; sequence QEVEEQKLHK…MLFIGGTKPP (312 aa). 4 consecutive IQ domains span residues 294-317, 318-338, 387-416, and 417-437; these read LHKA…LKKL, PSAV…MMLE, EEKS…SLTE, and YKAA…CRKK. Positions 336–362 form a coiled coil; it reads MLELNRQKEEEDLRLKLQLQRQRAMRL. Residues 530-598 form an interaction with BBS1, BBS2, BBS4, BBS7, BBS8 and BBS9 region; that stretch reads AEGKEPEQFL…MLFIGGTKPP (69 aa).

As to quaternary structure, interacts with calmodulin. Interacts with CEP290/NPHP6; IQCB1/NPHP5 and CEP290/NPHP6; are proposed to form a functional NPHP5-6 module localized to the centrosome. Interacts with ATXN10. Interacts with NPHP1, INVS, NPHP4 and RPGRIP1L; these interactions likely require additional interactors. Associates with the BBSome complex; interacts with BBS1, BBS2, BBS4, BBS5, BBS7, BBS8 and BBS9. Localized to the outer segment and connecting cilia of photoreceptor cells.

It localises to the cytoplasm. The protein localises to the cytoskeleton. It is found in the microtubule organizing center. Its subcellular location is the centrosome. In terms of biological role, involved in ciliogenesis. The function in an early step in cilia formation depends on its association with CEP290/NPHP6. Involved in regulation of the BBSome complex integrity, specifically for presence of BBS2 and BBS5 in the complex, and in ciliary targeting of selected BBSome cargos. May play a role in controlling entry of the BBSome complex to cilia possibly implicating CEP290/NPHP6. The chain is IQ calmodulin-binding motif-containing protein 1 (Iqcb1) from Mus musculus (Mouse).